The chain runs to 382 residues: Mannitol-1-phosphate 5-dehydrogenase (382 aa).

3–14 (ALHFGAGNIGRG) is a binding site for NAD(+).

The protein belongs to the mannitol dehydrogenase family.

It catalyses the reaction D-mannitol 1-phosphate + NAD(+) = beta-D-fructose 6-phosphate + NADH + H(+). This Salmonella newport (strain SL254) protein is Mannitol-1-phosphate 5-dehydrogenase.